Here is a 190-residue protein sequence, read N- to C-terminus: Putative protein p47 (190 aa).

This is Putative protein p47 (47) from Escherichia coli (Bacteriophage APSE-1).